The primary structure comprises 171 residues: PIDD1 alternative open reading frame protein (171 aa).

Disordered regions lie at residues 1–22 (MSGL…RAGG) and 76–156 (ILAS…LCPA). A compositionally biased stretch (low complexity) spans 84–99 (GPSAAGGHPGPAASEP).

In terms of assembly, interacts with calpain-2 catalytic subunit CAPN2. Cleaved in vitro following UV irradiation to induce caspase-mediated apoptosis and this cleavage is inhibited by a broad-spectrum caspase inhibitor.

The protein localises to the cytoplasm. The protein resides in the cytoskeleton. This chain is PIDD1 alternative open reading frame protein, found in Homo sapiens (Human).